The chain runs to 438 residues: Fibrinogen gamma chain (438 aa).

The N-terminal stretch at 1-25 (MTRLPKQGLLLLQSLALLSSAFGNI) is a signal peptide. N-linked (GlcNAc...) asparagine glycosylation occurs at asparagine 76. The region spanning 167 to 414 (QIQEFTGKDC…SVTMKIMPLN (248 aa)) is the Fibrinogen C-terminal domain. Residues cysteine 176 and cysteine 205 are joined by a disulfide bond. Residues aspartate 341, aspartate 343, and glycine 347 each coordinate Ca(2+). Cysteine 349 and cysteine 362 form a disulfide bridge.

In terms of assembly, heterohexamer; disulfide linked. Contains 2 sets of 3 non-identical chains (alpha, beta and gamma). The 2 heterotrimers are in head to head conformation with the N-termini in a small central domain. Conversion of fibrinogen to fibrin is triggered by thrombin, which cleaves fibrinopeptides A and B from alpha and beta chains, and thus exposes the N-terminal polymerization sites responsible for the formation of the soft clot. The soft clot is converted into the hard clot by factor XIIIA which catalyzes the epsilon-(gamma-glutamyl)lysine cross-linking between gamma chains (stronger) and between alpha chains (weaker) of different monomers.

The protein resides in the secreted. In terms of biological role, together with fibrinogen alpha (FGA) and fibrinogen beta (FGB), polymerizes to form an insoluble fibrin matrix. Has a major function in hemostasis as one of the primary components of blood clots. The protein is Fibrinogen gamma chain (fgg) of Xenopus laevis (African clawed frog).